The chain runs to 270 residues: 3-methyl-2-oxobutanoate hydroxymethyltransferase (270 aa).

D43 and D82 together coordinate Mg(2+). 3-methyl-2-oxobutanoate contacts are provided by residues 43–44 (DS), D82, and K110. E112 provides a ligand contact to Mg(2+). Catalysis depends on E179, which acts as the Proton acceptor.

This sequence belongs to the PanB family. Homodecamer; pentamer of dimers. The cofactor is Mg(2+).

Its subcellular location is the cytoplasm. It catalyses the reaction 3-methyl-2-oxobutanoate + (6R)-5,10-methylene-5,6,7,8-tetrahydrofolate + H2O = 2-dehydropantoate + (6S)-5,6,7,8-tetrahydrofolate. The protein operates within cofactor biosynthesis; (R)-pantothenate biosynthesis; (R)-pantoate from 3-methyl-2-oxobutanoate: step 1/2. Catalyzes the reversible reaction in which hydroxymethyl group from 5,10-methylenetetrahydrofolate is transferred onto alpha-ketoisovalerate to form ketopantoate. This chain is 3-methyl-2-oxobutanoate hydroxymethyltransferase, found in Psychrobacter sp. (strain PRwf-1).